Here is a 453-residue protein sequence, read N- to C-terminus: Presenilin-like protein At1g08700 (453 aa).

The Cytoplasmic segment spans residues 1–8 (MESSILDS). Residues 9 to 29 (LGVEIIGVMAPVSICMFLVVL) traverse the membrane as a helical segment. At 30 to 68 (LTYSLSVTSDPQIRSAANLIYIENPSDSTTVKLEGSLAN) the chain is on the lumenal side. The chain crosses the membrane as a helical span at residues 69–89 (AIVFVVLIAAVTFILVLLFYY). Residues 90 to 103 (NFTNFLKHYMRFSA) lie on the Cytoplasmic side of the membrane. Residues 104–124 (FFVLGTMGGAIFLSIIQHFSI) traverse the membrane as a helical segment. Residues 125 to 132 (PVDSITCF) lie on the Lumenal side of the membrane. The helical transmembrane segment at 133-153 (ILLFNFTILGTLSVFAGGIPI) threads the bilayer. The Cytoplasmic portion of the chain corresponds to 154-159 (VLRQCY). 2 helical membrane-spanning segments follow: residues 160 to 180 (MVVM…WTTW) and 181 to 201 (FILV…GGPL). The active site involves aspartate 190. At 202–369 (KLLVELASSR…VVDISNRGIK (168 aa)) the chain is on the cytoplasmic side. Disordered stretches follow at residues 226–248 (VSSG…GGGV) and 292–329 (IGNG…DRES). Over residues 227 to 240 (SSGNQRRNRGSSLR) the composition is skewed to low complexity. Phosphoserine is present on serine 296. Over residues 309 to 320 (PSASEHSTSVGT) the composition is skewed to polar residues. Residues 370 to 390 (LGLGDFIFYSVLVGRAAMYDL) form a helical membrane-spanning segment. Aspartate 374 is a catalytic residue. Topologically, residues 391–392 (MT) are lumenal. A helical membrane pass occupies residues 393-413 (VYACYLAIISGLGCTLILLSV). Over 414 to 417 (YNRA) the chain is Cytoplasmic. An intramembrane region (helical) is located at residues 418–438 (LPALPISIMLGVVFYFLTRLL). The PAL motif lies at 419–421 (PAL). Topologically, residues 439–453 (MEPFVVGVTTNLMMF) are cytoplasmic.

This sequence belongs to the peptidase A22A family. As to quaternary structure, homodimer. Probable component of the gamma-secretase complex, a complex composed of a presenilin homodimer, nicastrin, APH1 and PEN2.

It is found in the endoplasmic reticulum membrane. The protein localises to the golgi apparatus membrane. Probable subunit of the gamma-secretase complex, an endoprotease complex that catalyzes the intramembrane cleavage of integral membrane proteins such as Notch receptors. The sequence is that of Presenilin-like protein At1g08700 from Arabidopsis thaliana (Mouse-ear cress).